A 126-amino-acid polypeptide reads, in one-letter code: Small ribosomal subunit protein uS13 (126 aa).

The interval 92 to 126 is disordered; it reads HRRGLPANGQRTHTNARTRKGPRKGMLQRRPAATK. The segment covering 105–118 has biased composition (basic residues); it reads TNARTRKGPRKGML.

It belongs to the universal ribosomal protein uS13 family. Part of the 30S ribosomal subunit. Forms a loose heterodimer with protein S19. Forms two bridges to the 50S subunit in the 70S ribosome.

In terms of biological role, located at the top of the head of the 30S subunit, it contacts several helices of the 16S rRNA. In the 70S ribosome it contacts the 23S rRNA (bridge B1a) and protein L5 of the 50S subunit (bridge B1b), connecting the 2 subunits; these bridges are implicated in subunit movement. Contacts the tRNAs in the A and P-sites. This chain is Small ribosomal subunit protein uS13, found in Sorangium cellulosum (strain So ce56) (Polyangium cellulosum (strain So ce56)).